Here is a 276-residue protein sequence, read N- to C-terminus: Urease accessory protein UreD (276 aa).

It belongs to the UreD family. As to quaternary structure, ureD, UreF and UreG form a complex that acts as a GTP-hydrolysis-dependent molecular chaperone, activating the urease apoprotein by helping to assemble the nickel containing metallocenter of UreC. The UreE protein probably delivers the nickel.

Its subcellular location is the cytoplasm. Its function is as follows. Required for maturation of urease via the functional incorporation of the urease nickel metallocenter. This Polaromonas naphthalenivorans (strain CJ2) protein is Urease accessory protein UreD.